A 136-amino-acid polypeptide reads, in one-letter code: Ribonuclease YqgF (136 aa).

This sequence belongs to the YqgF nuclease family. In terms of assembly, monomer; also forms low amounts of dimers. The cofactor is Mn(2+).

The protein localises to the cytoplasm. In terms of biological role, has robust sequence-specific RNase activity, acting as a 5'-3' exo/endonuclease on ssRNA substrates with minimally 3 consecutive adenine bases. Has no detectable nuclease activity on dsRNA, dsDNA or Holliday junction DNA. The chain is Ribonuclease YqgF from Deinococcus radiodurans (strain ATCC 13939 / DSM 20539 / JCM 16871 / CCUG 27074 / LMG 4051 / NBRC 15346 / NCIMB 9279 / VKM B-1422 / R1).